Reading from the N-terminus, the 369-residue chain is DNA replication and repair protein RecF (369 aa).

30 to 37 provides a ligand contact to ATP; sequence GQNAQGKT.

Belongs to the RecF family.

It is found in the cytoplasm. In terms of biological role, the RecF protein is involved in DNA metabolism; it is required for DNA replication and normal SOS inducibility. RecF binds preferentially to single-stranded, linear DNA. It also seems to bind ATP. In Acetivibrio thermocellus (strain ATCC 27405 / DSM 1237 / JCM 9322 / NBRC 103400 / NCIMB 10682 / NRRL B-4536 / VPI 7372) (Clostridium thermocellum), this protein is DNA replication and repair protein RecF.